Here is a 1032-residue protein sequence, read N- to C-terminus: Exo-beta-D-glucosaminidase (1032 aa).

A signal peptide spans 1 to 32 (MSFRQKRTRIPLLAMTVTALAAAVCGVTTAPA). Positions 33-46 (ATGAEVAVPLSVGA) are excised as a propeptide. Residue Asp469 is the Proton donor of the active site. Glu541 (nucleophile) is an active-site residue. The interval 883–908 (SVRISGWNTGTQTVPADGSGPGPSDP) is disordered. The CBM6 domain occupies 909 to 1032 (VDYQAEDATI…GGPNVDKITL (124 aa)).

It belongs to the glycosyl hydrolase 2 family. Monomer.

It localises to the secreted. The catalysed reaction is Hydrolysis of chitosan or chitosan oligosaccharides to remove successive D-glucosamine residues from the non-reducing termini.. Functionally, hydrolyzes chitosan and chitooligosaccharides with retention of anomeric configuration. Has maximum activity on chitotetraose, chitopentaose and their corresponding alcohols, with a slight decrease in the rate of hydrolysis on longer chains. Has no activity against beta-D-glucopyranoside, beta-D-xylopyranoside, beta-D-mannoside, beta-D-glucuronide, beta-D-galactoside, beta-D-N-acetylgalactosamide, beta-D-N-acetylglucosaminide and alpha-D-N-acetylglucosaminide. The chain is Exo-beta-D-glucosaminidase from Amycolatopsis orientalis (Nocardia orientalis).